Consider the following 672-residue polypeptide: Fumonisin cluster-specific transcription factor FUM21 (672 aa).

The zn(2)-C6 fungal-type DNA-binding region spans 30 to 56; sequence CESCKRRKVRCNGTNPCNQCQKSSIEC. 2 disordered regions span residues 65–111 and 190–212; these read ANDG…RFDG and KSSG…GFNT. The span at 77 to 93 shows a compositional bias: polar residues; sequence SPVQHTRGSLTPPQTSP.

Its subcellular location is the nucleus. Functionally, transcription factor that regulates the expression of the gene cluster that mediates the biosynthesis of fumonisins B1 (FB1), B2 (FB2), B3 (FB3), and B4 (FB4), which are carcinogenic mycotoxins. This chain is Fumonisin cluster-specific transcription factor FUM21 (FUM21), found in Gibberella moniliformis (strain M3125 / FGSC 7600) (Maize ear and stalk rot fungus).